A 611-amino-acid polypeptide reads, in one-letter code: Zinc metalloproteinase-disintegrin-like MTP9 (611 aa).

The N-terminal stretch at 1 to 20 (MIEVLLVTICFTVFPYQGSS) is a signal peptide. A propeptide spanning residues 21 to 191 (IILESGNVND…DEPIEKISQL (171 aa)) is cleaved from the precursor. A Peptidase M12B domain is found at 205–401 (KYIELYVVVD…VRPQCILNKP (197 aa)). Residue glutamate 208 coordinates Ca(2+). The N-linked (GlcNAc...) asparagine glycan is linked to asparagine 282. Aspartate 292 serves as a coordination point for Ca(2+). 3 disulfide bridges follow: cysteine 316–cysteine 396, cysteine 356–cysteine 380, and cysteine 358–cysteine 363. Residues histidine 341, histidine 345, and histidine 351 each coordinate Zn(2+). The Ca(2+) site is built by cysteine 396, asparagine 399, asparagine 414, phenylalanine 416, glutamate 418, glutamate 421, and aspartate 424. Residues 409 to 493 (PPVCGNYFVE…ECPTDSFQRN (85 aa)) form the Disintegrin domain. 15 cysteine pairs are disulfide-bonded: cysteine 412–cysteine 441, cysteine 423–cysteine 436, cysteine 425–cysteine 431, cysteine 435–cysteine 456, cysteine 447–cysteine 453, cysteine 452–cysteine 478, cysteine 465–cysteine 485, cysteine 472–cysteine 504, cysteine 497–cysteine 509, cysteine 516–cysteine 566, cysteine 531–cysteine 573, cysteine 541–cysteine 575, cysteine 544–cysteine 554, cysteine 561–cysteine 599, and cysteine 593–cysteine 604. The short motif at 471–473 (DCD) is the D/ECD-tripeptide element. Ca(2+) contacts are provided by aspartate 473, leucine 474, glutamate 476, and aspartate 488. Residues asparagine 548 and asparagine 570 are each glycosylated (N-linked (GlcNAc...) asparagine).

This sequence belongs to the venom metalloproteinase (M12B) family. P-III subfamily. As to quaternary structure, monomer. Zn(2+) is required as a cofactor. Expressed by the venom gland.

Its subcellular location is the secreted. In terms of biological role, snake venom zinc metalloproteinase that may impair hemostasis in the prey. The sequence is that of Zinc metalloproteinase-disintegrin-like MTP9 from Drysdalia coronoides (White-lipped snake).